Reading from the N-terminus, the 451-residue chain is Trigger factor (451 aa).

The region spanning Asp165–Leu250 is the PPIase FKBP-type domain.

The protein belongs to the FKBP-type PPIase family. Tig subfamily.

The protein resides in the cytoplasm. It carries out the reaction [protein]-peptidylproline (omega=180) = [protein]-peptidylproline (omega=0). Functionally, involved in protein export. Acts as a chaperone by maintaining the newly synthesized protein in an open conformation. Functions as a peptidyl-prolyl cis-trans isomerase. This chain is Trigger factor, found in Helicobacter acinonychis (strain Sheeba).